A 1063-amino-acid chain; its full sequence is Unconventional myosin-Ic (1063 aa).

At M1 the chain carries N-acetylmethionine. The region spanning 47-731 (GVQDFVLLEN…TLFATEDALE (685 aa)) is the Myosin motor domain. Residues N88, Y96, 139-148 (SGESGAGKTE), and 192-196 (NDNSS) each bind ATP. Position 383 is an N6-methyllysine (K383). At S408 the chain carries Phosphoserine. Residue K486 is modified to N6-acetyllysine. Phosphoserine is present on S536. The interval 608 to 630 (LLELVEILKSKEPAYVRCIKPND) is actin-binding. 2 IQ domains span residues 734-757 (RQSL…FLRV) and 758-786 (KRSA…AAQT). S864 and S1041 each carry phosphoserine. In terms of domain architecture, TH1 spans 885–1059 (KDNYPQSVPR…NGHLAVVAPR (175 aa)).

Belongs to the TRAFAC class myosin-kinesin ATPase superfamily. Myosin family. Interacts (via its IQ motifs) with CABP1 and CIB1; the interaction with CABP1 and CIB1 is calcium-dependent. Interacts (via tail domain) with PLEKHB1 (via PH domain); the interaction is not affected by the presence or absence of calcium and CALM. Interacts with POLR1A. Interacts with POLR2A. Component of the B-WICH complex, at least composed of SMARCA5/SNF2H, BAZ1B/WSTF, SF3B1, DEK, MYO1C, ERCC6, MYBBP1A and DDX21. Interacts (via its IQ motifs) with CALM; this precludes interaction with YWHAB. Interacts with YWHAB; this precludes interaction with CALM. Interacts with RPS6. Interacts with actin. Interacts with LLPH. Interacts with GLUT4. Interacts (via its IQ motifs) with SH3BGRL3; the interaction is dependent on calcium and takes place at membrane ruffles. Post-translationally, isoform 2 contains a N-acetylmethionine at position 1. Widely expressed.

Its subcellular location is the cytoplasm. The protein resides in the nucleus. It is found in the cell cortex. It localises to the cell projection. The protein localises to the ruffle membrane. Its subcellular location is the cytoplasmic vesicle. The protein resides in the stereocilium membrane. It is found in the nucleolus. It localises to the nucleoplasm. In terms of biological role, myosins are actin-based motor molecules with ATPase activity. Unconventional myosins serve in intracellular movements. Their highly divergent tails are presumed to bind to membranous compartments, which would be moved relative to actin filaments. Involved in glucose transporter recycling in response to insulin by regulating movement of intracellular GLUT4-containing vesicles to the plasma membrane. Component of the hair cell's (the sensory cells of the inner ear) adaptation-motor complex. Acts as a mediator of adaptation of mechanoelectrical transduction in stereocilia of vestibular hair cells. Binds phosphoinositides and links the actin cytoskeleton to cellular membranes. Isoform 3 is involved in regulation of transcription. Associated with transcriptional active ribosomal genes. Appears to cooperate with the WICH chromatin-remodeling complex to facilitate transcription. Necessary for the formation of the first phosphodiester bond during transcription initiation. This Bos taurus (Bovine) protein is Unconventional myosin-Ic (MYO1C).